A 209-amino-acid chain; its full sequence is Ribonuclease HII (209 aa).

Residues 18 to 209 enclose the RNase H type-2 domain; the sequence is GLVAGVDEVG…FKPVKALLER (192 aa). D24, E25, and D116 together coordinate a divalent metal cation.

This sequence belongs to the RNase HII family. The cofactor is Mn(2+). It depends on Mg(2+) as a cofactor.

Its subcellular location is the cytoplasm. It catalyses the reaction Endonucleolytic cleavage to 5'-phosphomonoester.. Functionally, endonuclease that specifically degrades the RNA of RNA-DNA hybrids. This chain is Ribonuclease HII, found in Shewanella sp. (strain ANA-3).